Reading from the N-terminus, the 222-residue chain is Sigma non-opioid intracellular receptor 1 (222 aa).

The Lumenal portion of the chain corresponds to 1–6; that stretch reads MSLIRT. The helical transmembrane segment at 7 to 29 threads the bilayer; that stretch reads ILKLVVVVGFLSLTVQFIRHWMA. Topologically, residues 30–222 are cytoplasmic; it reads NKQYVFTKEE…STFLTESGVL (193 aa). Residues 97–104 form an important for ligand-binding region; the sequence is SLTEYVLL. A C-terminal hydrophobic region region spans residues 175 to 222; the sequence is FIPSTLGFALADTMFSTQDFLTLFYTARVYVKGMILEASTFLTESGVL.

It belongs to the ERG2 family. In terms of assembly, homotrimer.

The protein resides in the nucleus inner membrane. Its subcellular location is the nucleus outer membrane. It localises to the nucleus envelope. It is found in the cytoplasmic vesicle. The protein localises to the endoplasmic reticulum membrane. The protein resides in the membrane. May function in lipid transport from the endoplasmic reticulum and be involved in a wide array of cellular functions probably through regulation of the biogenesis of lipid microdomains at the plasma membrane. May regulate calcium efflux at the endoplasmic reticulum. The polypeptide is Sigma non-opioid intracellular receptor 1 (sigmar1) (Danio rerio (Zebrafish)).